A 261-amino-acid chain; its full sequence is Ribosome biogenesis protein NSA2 (261 aa).

The tract at residues 1 to 34 (MPQNEYIEQHIKQHGRRLDYEERKRKKAAREGHR) is disordered. Residues 7–34 (IEQHIKQHGRRLDYEERKRKKAAREGHR) are compositionally biased toward basic and acidic residues. 2 consecutive short sequence motifs (nuclear localization signal) follow at residues 15-22 (GRRLDYEE) and 51-58 (AKKRYSEK). The segment at 61-85 (MKKKIKTHQESKVKGPATPKEDDGE) is disordered.

It belongs to the eukaryotic ribosomal protein eS8 family. Ribosome biogenesis protein NSA2 subfamily. In terms of assembly, component of the pre-66S ribosomal particle. Interacts with NOP7 and RRP1. Interacts with RSA4 (via WD repeats).

It localises to the nucleus. The protein resides in the nucleolus. Functionally, involved in the biogenesis of the 60S ribosomal subunit. May play a part in the quality control of pre-60S particles. This Debaryomyces hansenii (strain ATCC 36239 / CBS 767 / BCRC 21394 / JCM 1990 / NBRC 0083 / IGC 2968) (Yeast) protein is Ribosome biogenesis protein NSA2 (NSA2).